Here is a 337-residue protein sequence, read N- to C-terminus: tRNA N6-adenosine threonylcarbamoyltransferase (337 aa).

2 residues coordinate Fe cation: His-107 and His-111. Substrate-binding positions include Leu-129–Gly-133, Asp-162, Gly-175, and Asn-271. Position 299 (Asp-299) interacts with Fe cation.

It belongs to the KAE1 / TsaD family. Fe(2+) serves as cofactor.

Its subcellular location is the cytoplasm. The enzyme catalyses L-threonylcarbamoyladenylate + adenosine(37) in tRNA = N(6)-L-threonylcarbamoyladenosine(37) in tRNA + AMP + H(+). Required for the formation of a threonylcarbamoyl group on adenosine at position 37 (t(6)A37) in tRNAs that read codons beginning with adenine. Is involved in the transfer of the threonylcarbamoyl moiety of threonylcarbamoyl-AMP (TC-AMP) to the N6 group of A37, together with TsaE and TsaB. TsaD likely plays a direct catalytic role in this reaction. In Sulfurovum sp. (strain NBC37-1), this protein is tRNA N6-adenosine threonylcarbamoyltransferase.